The primary structure comprises 142 residues: MSTPSVQTFGKKKTATAVAHVKAGKGLIKVNGAPITLVQPEILRFKVYEPLTLVGLDKFQNIDIRVKVSGGGHVSQVYAIRQAIAKGLVAYHQKFVDEASKNELKKVFASYDKTLLVADSRRMEPKKFGGRGARARFQKSYR.

This sequence belongs to the universal ribosomal protein uS9 family.

The polypeptide is Small ribosomal subunit protein uS9 (RPS16) (Debaryomyces hansenii (strain ATCC 36239 / CBS 767 / BCRC 21394 / JCM 1990 / NBRC 0083 / IGC 2968) (Yeast)).